The following is a 195-amino-acid chain: Holliday junction branch migration complex subunit RuvA (195 aa).

The tract at residues 1-63 (MIASVRGEVI…EDSMTLYGFV (63 aa)) is domain I. Residues 64–142 (DGDARDLFLT…PVSAGGGAAV (79 aa)) are domain II. Positions 143–150 (GGHAIRGP) are flexible linker. The domain III stretch occupies residues 150–195 (PVVEALVGLGFAAKQAEEATDKVLANDPEATTSSALRAALSMLGKK).

It belongs to the RuvA family. As to quaternary structure, homotetramer. Forms an RuvA(8)-RuvB(12)-Holliday junction (HJ) complex. HJ DNA is sandwiched between 2 RuvA tetramers; dsDNA enters through RuvA and exits via RuvB. An RuvB hexamer assembles on each DNA strand where it exits the tetramer. Each RuvB hexamer is contacted by two RuvA subunits (via domain III) on 2 adjacent RuvB subunits; this complex drives branch migration. In the full resolvosome a probable DNA-RuvA(4)-RuvB(12)-RuvC(2) complex forms which resolves the HJ.

It is found in the cytoplasm. The RuvA-RuvB-RuvC complex processes Holliday junction (HJ) DNA during genetic recombination and DNA repair, while the RuvA-RuvB complex plays an important role in the rescue of blocked DNA replication forks via replication fork reversal (RFR). RuvA specifically binds to HJ cruciform DNA, conferring on it an open structure. The RuvB hexamer acts as an ATP-dependent pump, pulling dsDNA into and through the RuvAB complex. HJ branch migration allows RuvC to scan DNA until it finds its consensus sequence, where it cleaves and resolves the cruciform DNA. The sequence is that of Holliday junction branch migration complex subunit RuvA from Mycolicibacterium smegmatis (strain ATCC 700084 / mc(2)155) (Mycobacterium smegmatis).